The chain runs to 97 residues: Secreted Ly-6/uPAR domain-containing protein 2 (97 aa).

Positions 1–22 (MQLGTGLLLAAVLSLQLAAAEA) are cleaved as a signal peptide. Disulfide bonds link cysteine 25/cysteine 47, cysteine 28/cysteine 34, cysteine 40/cysteine 68, cysteine 72/cysteine 88, and cysteine 89/cysteine 94. Positions 25–95 (CHQCTGFGGC…IACCQTSLCN (71 aa)) constitute a UPAR/Ly6 domain.

In terms of assembly, interacts with CHRNA3, CHRNA4, CHRNA5, CHRNA7, CHRNB2 and CHRNB4. Interacts with CHRM1 and CHRM3 probably in an allosteric manner. In terms of tissue distribution, expressed at highest levels in cervix and esophagus, followed by adult and fetal skin. Expressed at lower levels in brain, lung, stomach, small intestine, colon, rectum, uterus, and thymus. Not detected in spleen nor bone marrow. Up-regulated 3-fold in psoriatic lesional skin. In the epidermis, predominantly produced by keratinocytes of the suprabasal epidermal compartment (at protein level). In attached gingiva, produced at highest levels by basal cells located in the lowermost epithelial layers (at protein level). Detected in serum (at protein level).

Its subcellular location is the secreted. In terms of biological role, binds and may modulate the functional properties of nicotinic and muscarinic acetylcholine receptors. May regulate keratinocytes proliferation, differentiation and apoptosis. In vitro moderately inhibits ACh-evoked currents of alpha-3:beta-2-containing nAChRs and strongly these of alpha-4:beta-2-containing nAChRs, modulates alpha-7-containing nAChRs, and inhibits nicotine-induced signaling probably implicating alpha-3:beta-4-containing nAChRs. Proposed to act on alpha-3:beta-2 and alpha-7 nAChRs in an orthosteric, and on mAChRs, such as CHRM1 and CHRM3, in an allosteric manner. The sequence is that of Secreted Ly-6/uPAR domain-containing protein 2 from Homo sapiens (Human).